Consider the following 372-residue polypeptide: Enolase (372 aa).

2 residues coordinate substrate: histidine 95 and glutamate 104. The active-site Proton donor is the glutamate 147. Positions 182, 232, and 257 each coordinate Mg(2+). Residues glutamate 232 and aspartate 257 each contribute to the substrate site. Lysine 282 acts as the Proton acceptor in catalysis. Substrate is bound by residues 309-312 and lysine 333; that span reads SHRS.

This sequence belongs to the enolase family. As to quaternary structure, homodimer. The cofactor is Mg(2+).

It is found in the cytoplasm. The enzyme catalyses (2R)-2-phosphoglycerate = phosphoenolpyruvate + H2O. It functions in the pathway carbohydrate degradation; glycolysis; pyruvate from D-glyceraldehyde 3-phosphate: step 4/5. The polypeptide is Enolase (ENO) (Chlamydomonas reinhardtii (Chlamydomonas smithii)).